A 64-amino-acid chain; its full sequence is Large ribosomal subunit protein uL30 (64 aa).

It belongs to the universal ribosomal protein uL30 family. In terms of assembly, part of the 50S ribosomal subunit.

This is Large ribosomal subunit protein uL30 from Rhodopseudomonas palustris (strain HaA2).